Consider the following 111-residue polypeptide: Vacuolar ATPase assembly integral membrane protein VMA21 (111 aa).

Residues 1–39 (MATRRIVATEKSILEKDDHIGSSPAAGEKSNITPAVPLD) are Cytoplasmic-facing. The helical transmembrane segment at 40-60 (VILKLLAFTLAMVVIPIGSYF) threads the bilayer. Residues 61–73 (VTVNSIFKGNSTY) lie on the Lumenal side of the membrane. Residues 74 to 94 (AGALAAIMANVVLVAYVVVAM) traverse the membrane as a helical segment. The Cytoplasmic segment spans residues 95-111 (NEDQTEQEKAKEGKKDR). Positions 108 to 111 (KKDR) match the Prevents secretion from ER motif.

It belongs to the VMA21 family.

The protein resides in the endoplasmic reticulum membrane. The protein localises to the endoplasmic reticulum-Golgi intermediate compartment membrane. It localises to the cytoplasmic vesicle. Its subcellular location is the COPII-coated vesicle membrane. Functionally, required for the assembly of the V0 complex of the vacuolar ATPase (V-ATPase) in the endoplasmic reticulum. The chain is Vacuolar ATPase assembly integral membrane protein VMA21 from Pyricularia oryzae (strain 70-15 / ATCC MYA-4617 / FGSC 8958) (Rice blast fungus).